The primary structure comprises 164 residues: 2S albumin seed storage protein PINP1 (164 aa).

An N-terminal signal peptide occupies residues 1 to 29; sequence MGVFSSPMSTLRWVTLFAALLSLLEWGTA. Positions 92 to 107 are enriched in low complexity; that stretch reads DQSQSYDSSTDSDSQD. Residues 92–137 are disordered; sequence DQSQSYDSSTDSDSQDGAPLNQRRRRRGEGRGREEEEAVERAEELP. Over residues 120 to 137 the composition is skewed to basic and acidic residues; it reads EGRGREEEEAVERAEELP. An N-linked (GalNAc...) asparagine glycan is attached at Asn138.

This sequence belongs to the 2S seed storage albumins family.

This chain is 2S albumin seed storage protein PINP1, found in Pinus pinea (Italian stone pine).